The sequence spans 423 residues: Adenylosuccinate synthetase (423 aa).

GTP-binding positions include 11–17 and 39–41; these read GDEGKGK and GHT. Asp12 serves as the catalytic Proton acceptor. Residues Asp12 and Gly39 each contribute to the Mg(2+) site. IMP is bound by residues 12-15, 37-40, Thr127, Arg141, Gln223, Thr238, and Arg302; these read DEGK and NAGH. His40 functions as the Proton donor in the catalytic mechanism. 298 to 304 contributes to the substrate binding site; the sequence is TTTGRSR. Residues Arg304, 330-332, and 412-414 contribute to the GTP site; these read KLD and SVG.

Belongs to the adenylosuccinate synthetase family. In terms of assembly, homodimer. Mg(2+) serves as cofactor.

The protein resides in the cytoplasm. It catalyses the reaction IMP + L-aspartate + GTP = N(6)-(1,2-dicarboxyethyl)-AMP + GDP + phosphate + 2 H(+). It functions in the pathway purine metabolism; AMP biosynthesis via de novo pathway; AMP from IMP: step 1/2. Functionally, plays an important role in the de novo pathway of purine nucleotide biosynthesis. Catalyzes the first committed step in the biosynthesis of AMP from IMP. In Methanococcoides burtonii (strain DSM 6242 / NBRC 107633 / OCM 468 / ACE-M), this protein is Adenylosuccinate synthetase.